The following is a 150-amino-acid chain: MINSSKINLYSYVCSIFIMSIVVISLICSEALQIQQAKEPFRGHLTRVTIQNYNDYLLAIHCKSRDDDLGFHILAKGELFGWKFHVNFRYSTLCFCGFSQRQINKGVFIIYVASRDFYRCANCTWKAEKDGFHGYGDIPTRGYLFYNWLN.

The N-linked (GlcNAc...) asparagine glycan is linked to N122.

Belongs to the plant self-incompatibility (S1) protein family.

Its subcellular location is the secreted. This chain is S-protein homolog 28, found in Arabidopsis thaliana (Mouse-ear cress).